A 78-amino-acid polypeptide reads, in one-letter code: Small ribosomal subunit protein bS18 (78 aa).

The protein belongs to the bacterial ribosomal protein bS18 family. Part of the 30S ribosomal subunit. Forms a tight heterodimer with protein bS6.

In terms of biological role, binds as a heterodimer with protein bS6 to the central domain of the 16S rRNA, where it helps stabilize the platform of the 30S subunit. This is Small ribosomal subunit protein bS18 from Pseudothermotoga lettingae (strain ATCC BAA-301 / DSM 14385 / NBRC 107922 / TMO) (Thermotoga lettingae).